The chain runs to 337 residues: Putative olfactory receptor 1F12P (337 aa).

At 1–25 (MEGKNQTNISEFLLLGFSSWQQQQV) the chain is on the extracellular side. N-linked (GlcNAc...) asparagine glycans are attached at residues Asn-5 and Asn-8. A helical membrane pass occupies residues 26–49 (LLFALFLCLYLTGLFGNLLILLAI). Residues 50–57 (GSDHCLHT) lie on the Cytoplasmic side of the membrane. Residues 58–79 (PMYFFLANLSLVDLCLPSATVP) form a helical membrane-spanning segment. Residues 80–100 (KMLLNIQTQTQTISYPGCLAQ) lie on the Extracellular side of the membrane. The cysteines at positions 97 and 189 are disulfide-linked. A helical membrane pass occupies residues 101-120 (MYFCMMFANMDNFLLTVMAY). The Cytoplasmic portion of the chain corresponds to 121–139 (DRYVAICHPLHYSTIMALR). Residues 140-158 (LCASLVAAPWVIAILNPLL) form a helical membrane-spanning segment. At 159–196 (HTLMMAHLHFCSDNVIHHFFCDINSLLPLSCSDTSLNQ) the chain is on the extracellular side. The helical transmembrane segment at 197–219 (LSVLATVGLIFVVPSVCILVSYI) threads the bilayer. Residues 220-236 (LIVSAVMKVPSAQGKLK) are Cytoplasmic-facing. Residues 237 to 259 (AFSTCGSHLALVILFYGAITGVY) traverse the membrane as a helical segment. Over 260–272 (MSPLSNHSTEKDS) the chain is Extracellular. N-linked (GlcNAc...) asparagine glycosylation occurs at Asn-265. A helical membrane pass occupies residues 273 to 292 (AASVIFMVVAPVLNPFIYSL). At 293–337 (RNNELKGTLKKTLSRPGAVAHACNPSTLGGRGGWIMRSGDRDHPG) the chain is on the cytoplasmic side.

The protein belongs to the G-protein coupled receptor 1 family.

The protein resides in the cell membrane. Odorant receptor. The sequence is that of Putative olfactory receptor 1F12P from Homo sapiens (Human).